The following is a 216-amino-acid chain: Adenylate kinase (216 aa).

10–15 (GAGKGT) is an ATP binding site. The NMP stretch occupies residues 30–59 (STGDIFRAHMSQGTPLGKLAKEYVDAGKYV). Residues threonine 31, arginine 36, 57 to 59 (KYV), 85 to 88 (GYPR), and glutamine 92 contribute to the AMP site. Positions 126 to 163 (GRRVCRSCGATYHVRFNPPREAGRCDRCGGELYQRSDD) are LID. Position 127 (arginine 127) interacts with ATP. The Zn(2+) site is built by cysteine 130 and cysteine 133. Residue 136 to 137 (TY) coordinates ATP. Positions 150 and 153 each coordinate Zn(2+). AMP-binding residues include arginine 160 and arginine 171. Glutamine 199 lines the ATP pocket.

The protein belongs to the adenylate kinase family. In terms of assembly, monomer.

The protein resides in the cytoplasm. It catalyses the reaction AMP + ATP = 2 ADP. Its pathway is purine metabolism; AMP biosynthesis via salvage pathway; AMP from ADP: step 1/1. Catalyzes the reversible transfer of the terminal phosphate group between ATP and AMP. Plays an important role in cellular energy homeostasis and in adenine nucleotide metabolism. In Symbiobacterium thermophilum (strain DSM 24528 / JCM 14929 / IAM 14863 / T), this protein is Adenylate kinase.